A 339-amino-acid polypeptide reads, in one-letter code: Small ribosomal subunit biogenesis GTPase RsgA (339 aa).

The region spanning M111–F271 is the CP-type G domain. Residues N159 to D162 and G213 to S221 contribute to the GTP site. Zn(2+)-binding residues include C295, C300, H302, and C308.

The protein belongs to the TRAFAC class YlqF/YawG GTPase family. RsgA subfamily. As to quaternary structure, monomer. Associates with 30S ribosomal subunit, binds 16S rRNA. It depends on Zn(2+) as a cofactor.

The protein resides in the cytoplasm. Its function is as follows. One of several proteins that assist in the late maturation steps of the functional core of the 30S ribosomal subunit. Helps release RbfA from mature subunits. May play a role in the assembly of ribosomal proteins into the subunit. Circularly permuted GTPase that catalyzes slow GTP hydrolysis, GTPase activity is stimulated by the 30S ribosomal subunit. The sequence is that of Small ribosomal subunit biogenesis GTPase RsgA from Pseudomonas aeruginosa (strain ATCC 15692 / DSM 22644 / CIP 104116 / JCM 14847 / LMG 12228 / 1C / PRS 101 / PAO1).